We begin with the raw amino-acid sequence, 160 residues long: Eosinophil cationic protein (160 aa).

The N-terminal stretch at 1 to 27 (MVPKLFTSQICLLLLLGLMGVEGSLHA) is a signal peptide. The required for nearly all of the bactericidal activities; partially involved in LPS-binding stretch occupies residues 28–72 (RPPQFTKAQWFAIQHINVNPPRCTIAMRVINNYQRRCKNQNTFLR). H42 (proton acceptor) is an active-site residue. Cystine bridges form between C50–C110, C64–C123, C82–C138, and C89–C98. Y60 is modified (3'-nitrotyrosine). 65 to 69 (KNQNT) provides a ligand contact to substrate. N92 and N119 each carry an N-linked (GlcNAc...) asparagine glycan. H155 functions as the Proton donor in the catalytic mechanism.

The protein belongs to the pancreatic ribonuclease family. In terms of assembly, interacts with bacterial lipopolysaccharide (LPS) and lipoteichoic acid (LTA). In vitro interacts with phospholipid bilayers.

The protein resides in the secreted. Functionally, cytotoxin and helminthotoxin with low-efficiency ribonuclease activity. Possesses a wide variety of biological activities. Exhibits antibacterial activity. The chain is Eosinophil cationic protein (RNASE3) from Macaca fascicularis (Crab-eating macaque).